The primary structure comprises 486 residues: MTIKHTQDLAQIRAMVPEMRRVKAIHFIGIGGAGMSGIAEVLLNEGYQISGSDLAANAVTDRLADKGATIFIGHEAHNVAHASVVVVSTAINEQNPEIQAAREKRIPIVRRAEMLAELMRFRHGIAVAGTHGKTTTTALVTQIYSEAGLDPTFVNGGLVKSAGTNARLGSSRILIAEADESDASFLHLQPMVTIVTNIEADHMDTYGGDFENLKQTFIDFLHNLPFYGQAILCIDDPVIRELIPRVSRQVITYGFSEDADVRIENYRQNGQQGQFTVVRKGKANLDITLNIPGRHNALNAAAAIAVATEDDIRDEAILRAMANTQGTGRRFDHLGEFETGNGVAMLVDDYGHHPTEVDVTIKAARNGWAEKRLVMIFQPHRYTRTRDLYDDFANVLEQVDVLIMLDVYAAGEKPIAGADGRSLCRTIRSRGKIDPIFVPDSQTLPSVLANILQDGDLVLTQGAGDVGKVARHLAALELNIGRMQQI.

Glycine 129–threonine 135 provides a ligand contact to ATP.

The protein belongs to the MurCDEF family.

It localises to the cytoplasm. It carries out the reaction UDP-N-acetyl-alpha-D-muramate + L-alanine + ATP = UDP-N-acetyl-alpha-D-muramoyl-L-alanine + ADP + phosphate + H(+). It participates in cell wall biogenesis; peptidoglycan biosynthesis. Its function is as follows. Cell wall formation. This chain is UDP-N-acetylmuramate--L-alanine ligase, found in Vibrio cholerae serotype O1 (strain ATCC 39315 / El Tor Inaba N16961).